Reading from the N-terminus, the 109-residue chain is UPF0060 membrane protein RC1_3291 (109 aa).

4 helical membrane-spanning segments follow: residues 4 to 24 (IATY…FWAW), 31 to 51 (PLWL…LTRI), 59 to 79 (AYAA…WLVE), and 88 to 108 (TLGT…PRGG).

The protein belongs to the UPF0060 family.

It is found in the cell inner membrane. This Rhodospirillum centenum (strain ATCC 51521 / SW) protein is UPF0060 membrane protein RC1_3291.